Reading from the N-terminus, the 690-residue chain is Xylosyl- and glucuronyltransferase LARGE2 (690 aa).

Residues M1–P7 lie on the Cytoplasmic side of the membrane. The chain crosses the membrane as a helical; Signal-anchor for type II membrane protein span at residues R8–G28. At R29–A690 the chain is on the lumenal side. 2 N-linked (GlcNAc...) asparagine glycosylation sites follow: N50 and N77. The interval L67–C342 is xylosyltransferase activity. Positions 171 and 173 each coordinate Mn(2+). The N-linked (GlcNAc...) asparagine glycan is linked to N201. The tract at residues R343–S686 is glucuronyltransferase activity. Mn(2+) is bound by residues D491 and D493.

This sequence in the C-terminal section; belongs to the glycosyltransferase 49 family. In the N-terminal section; belongs to the glycosyltransferase 8 family. In terms of assembly, interacts with B4GAT1. Mn(2+) is required as a cofactor.

The protein localises to the golgi apparatus membrane. It carries out the reaction 3-O-[beta-D-GlcA-(1-&gt;3)-beta-D-Xyl-(1-&gt;4)-Rib-ol-P-Rib-ol-P-3-beta-D-GalNAc-(1-&gt;3)-beta-D-GlcNAc-(1-&gt;4)-(O-6-P-alpha-D-Man)]-Thr-[protein] + UDP-alpha-D-xylose = 3-O-[alpha-D-Xyl-(1-&gt;3)-beta-D-GlcA-(1-&gt;4)-beta-D-Xyl-(1-&gt;4)-Rib-ol-P-Rib-ol-P-3-beta-D-GalNAc-(1-&gt;3)-beta-D-GlcNAc-(1-&gt;4)-(O-6-P-alpha-D-Man)]-Thr-[protein] + UDP + H(+). The enzyme catalyses 3-O-{(1-&gt;[3)-alpha-D-Xyl-(1-&gt;3)-beta-D-GlcA-(1-&gt;](n)-4)-beta-D-Xyl-(1-&gt;4)-Rib-ol-P-Rib-ol-P-3-beta-D-GalNAc-(1-&gt;3)-beta-D-GlcNAc-(1-&gt;4)-O-6-P-alpha-D-Man}-L-Thr-[protein] + UDP-alpha-D-glucuronate = 3-O-{beta-D-GlcA-(1-&gt;[3)-alpha-D-Xyl-(1-&gt;3)-beta-D-GlcA-(1-&gt;](n)-4)-beta-D-Xyl-(1-&gt;4)-Rib-ol-P-Rib-ol-P-3-beta-D-GalNAc-(1-&gt;3)-beta-D-GlcNAc-(1-&gt;4)-O-6-P-alpha-D-Man}-L-Thr-[protein] + UDP + H(+). It catalyses the reaction 3-O-{beta-D-GlcA-(1-&gt;[3)-alpha-D-Xyl-(1-&gt;3)-beta-D-GlcA-(1-&gt;](n)-4)-beta-D-Xyl-(1-&gt;4)-Rib-ol-P-Rib-ol-P-3-beta-D-GalNAc-(1-&gt;3)-beta-D-GlcNAc-(1-&gt;4)-O-6-P-alpha-D-Man}-L-Thr-[protein] + UDP-alpha-D-xylose = 3-O-{(1-&gt;[3)-alpha-D-Xyl-(1-&gt;3)-beta-D-GlcA-(1-&gt;](n+1)-4)-beta-D-Xyl-(1-&gt;4)-Rib-ol-P-Rib-ol-P-3-beta-D-GalNAc-(1-&gt;3)-beta-D-GlcNAc-(1-&gt;4)-O-6-P-alpha-D-Man}-L-Thr-[protein] + UDP + H(+). The protein operates within protein modification; protein glycosylation. Bifunctional glycosyltransferase with both alpha-1,3-xylosyltransferase and beta-1,3-glucuronyltransferase activities involved in the maturation of alpha-dystroglycan (DAG1) by glycosylation leading to DAG1 binding to laminin G-like domain-containing extracellular proteins with high affinity and in a phosphorylated-O-mannosyl trisaccharide dependent manner. Elongates the glucuronyl-beta-1,4-xylose-beta disaccharide primer structure by adding repeating units [-3-Xylose-alpha-1,3-GlcA-beta-1-] to produce a heteropolysaccharide. Supports the maturation of DAG1 more effectively than LARGE1. In addition, can modify both heparan sulfate (HS)- and chondroitin/dermatan sulfate (CS/DS)-proteoglycans (PGs), namely GPC4, with a glycosaminoglycan (GAG)-like polysaccharide composed of xylose and glucuronic acid to confer laminin binding. In Rattus norvegicus (Rat), this protein is Xylosyl- and glucuronyltransferase LARGE2.